A 79-amino-acid polypeptide reads, in one-letter code: Exodeoxyribonuclease 7 small subunit (79 aa).

This sequence belongs to the XseB family. In terms of assembly, heterooligomer composed of large and small subunits.

Its subcellular location is the cytoplasm. The catalysed reaction is Exonucleolytic cleavage in either 5'- to 3'- or 3'- to 5'-direction to yield nucleoside 5'-phosphates.. Its function is as follows. Bidirectionally degrades single-stranded DNA into large acid-insoluble oligonucleotides, which are then degraded further into small acid-soluble oligonucleotides. The sequence is that of Exodeoxyribonuclease 7 small subunit from Lactococcus lactis subsp. lactis (strain IL1403) (Streptococcus lactis).